A 331-amino-acid polypeptide reads, in one-letter code: Lipoyl synthase (331 aa).

The [4Fe-4S] cluster site is built by cysteine 57, cysteine 62, cysteine 68, cysteine 83, cysteine 87, cysteine 90, and serine 294. The 215-residue stretch at 69 to 283 (WEDREATFLI…KAEAEAIGFL (215 aa)) folds into the Radical SAM core domain.

It belongs to the radical SAM superfamily. Lipoyl synthase family. It depends on [4Fe-4S] cluster as a cofactor.

The protein localises to the cytoplasm. It catalyses the reaction [[Fe-S] cluster scaffold protein carrying a second [4Fe-4S](2+) cluster] + N(6)-octanoyl-L-lysyl-[protein] + 2 oxidized [2Fe-2S]-[ferredoxin] + 2 S-adenosyl-L-methionine + 4 H(+) = [[Fe-S] cluster scaffold protein] + N(6)-[(R)-dihydrolipoyl]-L-lysyl-[protein] + 4 Fe(3+) + 2 hydrogen sulfide + 2 5'-deoxyadenosine + 2 L-methionine + 2 reduced [2Fe-2S]-[ferredoxin]. It functions in the pathway protein modification; protein lipoylation via endogenous pathway; protein N(6)-(lipoyl)lysine from octanoyl-[acyl-carrier-protein]: step 2/2. Catalyzes the radical-mediated insertion of two sulfur atoms into the C-6 and C-8 positions of the octanoyl moiety bound to the lipoyl domains of lipoate-dependent enzymes, thereby converting the octanoylated domains into lipoylated derivatives. The chain is Lipoyl synthase from Clavibacter michiganensis subsp. michiganensis (strain NCPPB 382).